The following is a 219-amino-acid chain: Probable N-acetyltransferase camello (219 aa).

2 helical membrane-spanning segments follow: residues phenylalanine 44 to leucine 64 and serine 66 to alanine 86. The N-acetyltransferase domain maps to leucine 62 to alanine 211.

This sequence belongs to the camello family.

It is found in the golgi apparatus membrane. Functionally, plays a role in regulation of gastrulation, possibly by controlled reduction of cell adhesion in the periblastopore region which is necessary for optimal cell motility. The protein is Probable N-acetyltransferase camello of Xenopus tropicalis (Western clawed frog).